The following is a 485-amino-acid chain: DNA polymerase subunit gamma-2 (485 aa).

The tract at residues 28–67 (RQPEQLSKGTGSFVGPVRSQAELPRNEPREAPESGGEGSE) is disordered.

Heterotrimer composed of a catalytic subunit and a homodimer of accessory subunits (POLG:POLG2).

It localises to the mitochondrion. It is found in the mitochondrion matrix. Its subcellular location is the mitochondrion nucleoid. Accessory subunit of DNA polymerase gamma solely responsible for replication of mitochondrial DNA (mtDNA). Acts as an allosteric regulator of the holoenzyme activities. Enhances the polymerase activity and the processivity of POLG by increasing its interactions with the DNA template. Suppresses POLG exonucleolytic proofreading especially toward homopolymeric templates bearing mismatched termini. Binds to single-stranded DNA. The chain is DNA polymerase subunit gamma-2 (POLG2) from Bos taurus (Bovine).